The chain runs to 583 residues: ATP-dependent lipid A-core flippase (583 aa).

Helical transmembrane passes span 27–47 (LAVAVVALIINAVSDTYMVSL), 69–89 (LLVFGLMFIRGISSFVSTYCL), 142–162 (ALVSIVREGTSIIGLLVLMFY), 165–185 (WQLSLVLILVAPVVAWAIGFV), and 249–269 (AAANPIIQMIASIAIVVVLYL). Residues 28-310 (AVAVVALIIN…LTNVTSQFQR (283 aa)) form the ABC transmembrane type-1 domain. One can recognise an ABC transporter domain in the interval 342–578 (VNVKDISFTY…DGAYAQLHRI (237 aa)). 376–383 (GRSGSGKS) lines the ATP pocket.

It belongs to the ABC transporter superfamily. Lipid exporter (TC 3.A.1.106) family. As to quaternary structure, homodimer.

The protein localises to the cell inner membrane. The catalysed reaction is ATP + H2O + lipid A-core oligosaccharideSide 1 = ADP + phosphate + lipid A-core oligosaccharideSide 2.. In terms of biological role, involved in lipopolysaccharide (LPS) biosynthesis. Translocates lipid A-core from the inner to the outer leaflet of the inner membrane. Transmembrane domains (TMD) form a pore in the inner membrane and the ATP-binding domain (NBD) is responsible for energy generation. This chain is ATP-dependent lipid A-core flippase, found in Vibrio vulnificus (strain YJ016).